Here is a 180-residue protein sequence, read N- to C-terminus: Adenine phosphoribosyltransferase (180 aa).

At alanine 2 the chain carries N-acetylalanine. A phosphoserine mark is found at serine 4, serine 15, and serine 30. Position 60 is a phosphotyrosine (tyrosine 60). Serine 66 carries the phosphoserine modification. N6-acetyllysine is present on lysine 114. Threonine 135 carries the phosphothreonine modification.

This sequence belongs to the purine/pyrimidine phosphoribosyltransferase family. In terms of assembly, homodimer.

The protein localises to the cytoplasm. The catalysed reaction is AMP + diphosphate = 5-phospho-alpha-D-ribose 1-diphosphate + adenine. Its pathway is purine metabolism; AMP biosynthesis via salvage pathway; AMP from adenine: step 1/1. Catalyzes a salvage reaction resulting in the formation of AMP, that is energically less costly than de novo synthesis. This Homo sapiens (Human) protein is Adenine phosphoribosyltransferase.